The following is a 519-amino-acid chain: Cell division cycle protein 20 homolog B (519 aa).

A disordered region spans residues 77-106; it reads WQLSPARDPESSSSVEEGPPSHTPESLASG. A compositionally biased stretch (low complexity) spans 87–96; sequence SSSSVEEGPP. 6 WD repeats span residues 229-266, 271-310, 353-392, 399-441, 443-484, and 487-519; these read RNDY…WIEN, VCCH…QLRN, YHKE…GVQG, PQST…NIQT, STQS…RSGG, and GHRD…WKCC.

The protein belongs to the WD repeat CDC20/Fizzy family. Expressed in multiciliated cells (MCCs).

It is found in the cytoplasm. Functionally, protein regulator of centriole-deuterosome disengagement and subsequently participates in the ciliogenesis in multiciliated cells (MCCs). The protein is Cell division cycle protein 20 homolog B of Mus musculus (Mouse).